A 306-amino-acid polypeptide reads, in one-letter code: Glutaminase (306 aa).

Positions 64, 115, 159, 166, 190, 242, and 260 each coordinate substrate.

The protein belongs to the glutaminase family. Homotetramer.

It catalyses the reaction L-glutamine + H2O = L-glutamate + NH4(+). This Aliivibrio salmonicida (strain LFI1238) (Vibrio salmonicida (strain LFI1238)) protein is Glutaminase.